The following is a 223-amino-acid chain: uncharacterized protein (223 aa).

It is found in the plastid. The protein localises to the chloroplast. This is an uncharacterized protein from Mesostigma viride (Green alga).